The following is a 293-amino-acid chain: Bifunctional protein FolD (293 aa).

NADP(+) contacts are provided by residues 164-166 (GRS), serine 193, and threonine 234.

It belongs to the tetrahydrofolate dehydrogenase/cyclohydrolase family. In terms of assembly, homodimer.

The catalysed reaction is (6R)-5,10-methylene-5,6,7,8-tetrahydrofolate + NADP(+) = (6R)-5,10-methenyltetrahydrofolate + NADPH. It carries out the reaction (6R)-5,10-methenyltetrahydrofolate + H2O = (6R)-10-formyltetrahydrofolate + H(+). It functions in the pathway one-carbon metabolism; tetrahydrofolate interconversion. Functionally, catalyzes the oxidation of 5,10-methylenetetrahydrofolate to 5,10-methenyltetrahydrofolate and then the hydrolysis of 5,10-methenyltetrahydrofolate to 10-formyltetrahydrofolate. The protein is Bifunctional protein FolD of Azobacteroides pseudotrichonymphae genomovar. CFP2.